The following is a 434-amino-acid chain: MSDFFAGIPAVTYEGPEARSDFAFRHYNPDEMVMGKRMEDQLRFAVAWWHSFAWEGGDPFGGPTFQRPWFGDTLDHARAKADAAFEMFRILNVPFYCFHDADIRPEGASFAETTANLEAMVDYLGQKQEASGKRLLWGTANLFSHRRYMAGAATNPDPDVFAYAAATIKTCMDATHKLGGANYVLWGGREGYETLLNTDLGREREQAGRMLQMVVDYKHKIGFEGTILLEPKPQEPTKHQYDYDVATVFSFLSEFGLQDEVKMNIEQGHAILAGHSFEHELALAREFGILGSIDMNRNDYQSGWDTDQFPNNIPEVALAYYEILRAGGFDTGGTNFDSKLRRQSLDPADLIAAHVAAMDVCAAGLKAAARMLEDGELEQRREDRYAGWRAPSAEAMLNGGKLEDCFAHVMETGLDPQPVSGGQERLEALVARYL.

Active-site residues include His99 and Asp102. Mg(2+) is bound by residues Glu230, Glu266, His269, Asp294, Asp305, Asp307, and Asp337.

It belongs to the xylose isomerase family. Homotetramer. Mg(2+) is required as a cofactor.

It localises to the cytoplasm. It carries out the reaction alpha-D-xylose = alpha-D-xylulofuranose. The sequence is that of Xylose isomerase from Dinoroseobacter shibae (strain DSM 16493 / NCIMB 14021 / DFL 12).